Consider the following 296-residue polypeptide: Acetylglutamate kinase (296 aa).

Substrate is bound by residues 71–72 (GG), Arg-93, and Asn-186.

Belongs to the acetylglutamate kinase family. ArgB subfamily.

Its subcellular location is the cytoplasm. It catalyses the reaction N-acetyl-L-glutamate + ATP = N-acetyl-L-glutamyl 5-phosphate + ADP. It functions in the pathway amino-acid biosynthesis; L-arginine biosynthesis; N(2)-acetyl-L-ornithine from L-glutamate: step 2/4. Functionally, catalyzes the ATP-dependent phosphorylation of N-acetyl-L-glutamate. This Synechococcus sp. (strain RCC307) protein is Acetylglutamate kinase.